A 422-amino-acid chain; its full sequence is 3-phosphoshikimate 1-carboxyvinyltransferase (422 aa).

3-phosphoshikimate contacts are provided by Lys20, Ser21, and Arg25. Lys20 contributes to the phosphoenolpyruvate binding site. 2 residues coordinate phosphoenolpyruvate: Gly91 and Arg119. Thr163, Ser164, Gln165, Asp305, Gln328, and Lys332 together coordinate 3-phosphoshikimate. Gln165 contributes to the phosphoenolpyruvate binding site. Asp305 serves as the catalytic Proton acceptor. Phosphoenolpyruvate-binding residues include Arg336 and Arg377.

The protein belongs to the EPSP synthase family. In terms of assembly, monomer.

The protein localises to the cytoplasm. The enzyme catalyses 3-phosphoshikimate + phosphoenolpyruvate = 5-O-(1-carboxyvinyl)-3-phosphoshikimate + phosphate. Its pathway is metabolic intermediate biosynthesis; chorismate biosynthesis; chorismate from D-erythrose 4-phosphate and phosphoenolpyruvate: step 6/7. Its function is as follows. Catalyzes the transfer of the enolpyruvyl moiety of phosphoenolpyruvate (PEP) to the 5-hydroxyl of shikimate-3-phosphate (S3P) to produce enolpyruvyl shikimate-3-phosphate and inorganic phosphate. The chain is 3-phosphoshikimate 1-carboxyvinyltransferase from Ruminiclostridium cellulolyticum (strain ATCC 35319 / DSM 5812 / JCM 6584 / H10) (Clostridium cellulolyticum).